The chain runs to 354 residues: Protein-glutamate methylesterase/protein-glutamine glutaminase (354 aa).

Residues 7 to 124 (KVLCVDDSAL…REGMLEYTEM (118 aa)) form the Response regulatory domain. 4-aspartylphosphate is present on aspartate 58. In terms of domain architecture, CheB-type methylesterase spans 156 to 348 (LLSSEKVIII…AALMKRAEAS (193 aa)). Residues serine 168, histidine 194, and aspartate 290 contribute to the active site.

This sequence belongs to the CheB family. In terms of processing, phosphorylated by CheA. Phosphorylation of the N-terminal regulatory domain activates the methylesterase activity.

The protein localises to the cytoplasm. The enzyme catalyses [protein]-L-glutamate 5-O-methyl ester + H2O = L-glutamyl-[protein] + methanol + H(+). It catalyses the reaction L-glutaminyl-[protein] + H2O = L-glutamyl-[protein] + NH4(+). In terms of biological role, involved in chemotaxis. Part of a chemotaxis signal transduction system that modulates chemotaxis in response to various stimuli. Catalyzes the demethylation of specific methylglutamate residues introduced into the chemoreceptors (methyl-accepting chemotaxis proteins or MCP) by CheR. Also mediates the irreversible deamidation of specific glutamine residues to glutamic acid. The protein is Protein-glutamate methylesterase/protein-glutamine glutaminase of Chromohalobacter salexigens (strain ATCC BAA-138 / DSM 3043 / CIP 106854 / NCIMB 13768 / 1H11).